Here is a 98-residue protein sequence, read N- to C-terminus: Small ribosomal subunit protein uS19 (98 aa).

2 disordered regions span residues 1 to 30 (MARSIKKGPFADKHLTKKVEDANKGNKKSV) and 78 to 98 (RTFHGHSAEKKAAAAPGPAKK). The segment covering 9-24 (PFADKHLTKKVEDANK) has biased composition (basic and acidic residues).

It belongs to the universal ribosomal protein uS19 family.

Its function is as follows. Protein S19 forms a complex with S13 that binds strongly to the 16S ribosomal RNA. The chain is Small ribosomal subunit protein uS19 from Anaeromyxobacter dehalogenans (strain 2CP-C).